Here is a 460-residue protein sequence, read N- to C-terminus: tRNA modification GTPase MnmE (460 aa).

3 residues coordinate (6S)-5-formyl-5,6,7,8-tetrahydrofolate: Arg29, Glu89, and Arg128. In terms of domain architecture, TrmE-type G spans Gly224–Gln382. Asn234 provides a ligand contact to K(+). GTP-binding positions include Asn234–Thr239, Ser253–Thr259, and Asp278–Gly281. Residue Ser238 participates in Mg(2+) binding. K(+) contacts are provided by Ser253, Ile255, and Thr258. Thr259 lines the Mg(2+) pocket. Lys460 contributes to the (6S)-5-formyl-5,6,7,8-tetrahydrofolate binding site.

This sequence belongs to the TRAFAC class TrmE-Era-EngA-EngB-Septin-like GTPase superfamily. TrmE GTPase family. In terms of assembly, homodimer. Heterotetramer of two MnmE and two MnmG subunits. It depends on K(+) as a cofactor.

It is found in the cytoplasm. Its function is as follows. Exhibits a very high intrinsic GTPase hydrolysis rate. Involved in the addition of a carboxymethylaminomethyl (cmnm) group at the wobble position (U34) of certain tRNAs, forming tRNA-cmnm(5)s(2)U34. The chain is tRNA modification GTPase MnmE from Cytophaga hutchinsonii (strain ATCC 33406 / DSM 1761 / CIP 103989 / NBRC 15051 / NCIMB 9469 / D465).